The following is a 356-amino-acid chain: uncharacterized protein (356 aa).

It belongs to the NAD(P)-dependent epimerase/dehydratase family. The cofactor is NAD(+). NADP(+) is required as a cofactor.

In terms of biological role, putative nucleotide sugar epimerase/dehydrogenase. This is an uncharacterized protein from Sinorhizobium fredii (strain NBRC 101917 / NGR234).